Reading from the N-terminus, the 380-residue chain is Cytochrome b (380 aa).

4 helical membrane-spanning segments follow: residues 34–54 (FGSL…LLAA), 78–99 (WLIR…YLHI), 114–134 (WNTG…GYVL), and 179–199 (FFTL…IHLT). Heme b is bound by residues His-84 and His-98. 2 residues coordinate heme b: His-183 and His-197. His-202 is an a ubiquinone binding site. 4 helical membrane passes run 227–247 (LKDI…ALFS), 289–309 (LGGV…PLLH), 321–341 (FSQL…WVGS), and 348–368 (FIII…ILFP).

The protein belongs to the cytochrome b family. As to quaternary structure, the cytochrome bc1 complex contains 11 subunits: 3 respiratory subunits (MT-CYB, CYC1 and UQCRFS1), 2 core proteins (UQCRC1 and UQCRC2) and 6 low-molecular weight proteins (UQCRH/QCR6, UQCRB/QCR7, UQCRQ/QCR8, UQCR10/QCR9, UQCR11/QCR10 and a cleavage product of UQCRFS1). This cytochrome bc1 complex then forms a dimer. Heme b serves as cofactor.

Its subcellular location is the mitochondrion inner membrane. Its function is as follows. Component of the ubiquinol-cytochrome c reductase complex (complex III or cytochrome b-c1 complex) that is part of the mitochondrial respiratory chain. The b-c1 complex mediates electron transfer from ubiquinol to cytochrome c. Contributes to the generation of a proton gradient across the mitochondrial membrane that is then used for ATP synthesis. This is Cytochrome b (MT-CYB) from Antigone antigone (Sarus crane).